Here is a 123-residue protein sequence, read N- to C-terminus: uncharacterized protein (123 aa).

In terms of domain architecture, Rhodanese spans 17-117 (SNDNAFLVDV…NNQDKGWKQN (101 aa)).

This is an uncharacterized protein from Rickettsia rickettsii.